The primary structure comprises 229 residues: MIVLLCVIFAFLVYSNWHSWLESLDRNPIRAYALTHKTRFTTNADIRETLSQKPALKGYFGQDIQDVKAKLLAISWVRDVVVRKVYPDRLSITLIEHNPVAVWNDVNFLSEQGIVFSLPPDRIDKTGFPMLYGPDTEGKVVLEAWSKIKADLKARNLDLSSVSVDNRGSWTITLSNNVELRLGRGEWTPKIDRFVTIFPEIDVPEGKKLAYVDLRYEHGAAVGFSPLPK.

Residues 1–21 traverse the membrane as a helical segment; sequence MIVLLCVIFAFLVYSNWHSWL. At 22–229 the chain is on the periplasmic side; it reads ESLDRNPIRA…AAVGFSPLPK (208 aa). The POTRA domain maps to 27-97; the sequence is NPIRAYALTH…DRLSITLIEH (71 aa).

Belongs to the FtsQ/DivIB family. FtsQ subfamily. As to quaternary structure, part of a complex composed of FtsB, FtsL and FtsQ.

Its subcellular location is the cell inner membrane. In terms of biological role, essential cell division protein. May link together the upstream cell division proteins, which are predominantly cytoplasmic, with the downstream cell division proteins, which are predominantly periplasmic. May control correct divisome assembly. This Actinobacillus pleuropneumoniae serotype 3 (strain JL03) protein is Cell division protein FtsQ.